A 417-amino-acid polypeptide reads, in one-letter code: NADH-quinone oxidoreductase subunit D (417 aa).

It belongs to the complex I 49 kDa subunit family. NDH-1 is composed of 14 different subunits. Subunits NuoB, C, D, E, F, and G constitute the peripheral sector of the complex.

It is found in the cell inner membrane. The enzyme catalyses a quinone + NADH + 5 H(+)(in) = a quinol + NAD(+) + 4 H(+)(out). Its function is as follows. NDH-1 shuttles electrons from NADH, via FMN and iron-sulfur (Fe-S) centers, to quinones in the respiratory chain. The immediate electron acceptor for the enzyme in this species is believed to be ubiquinone. Couples the redox reaction to proton translocation (for every two electrons transferred, four hydrogen ions are translocated across the cytoplasmic membrane), and thus conserves the redox energy in a proton gradient. This chain is NADH-quinone oxidoreductase subunit D, found in Nitrosomonas europaea (strain ATCC 19718 / CIP 103999 / KCTC 2705 / NBRC 14298).